A 547-amino-acid chain; its full sequence is CTP synthase (547 aa).

The segment at 1 to 265 is amidoligase domain; it reads MTRYVFITGG…DEIVLRKLHI (265 aa). S13 contributes to the CTP binding site. Position 13 (S13) interacts with UTP. Residues 14–19 and D71 each bind ATP; that span reads SLGKGI. Mg(2+) is bound by residues D71 and E139. Residues 146-148, 186-191, and K222 each bind CTP; these read DIE and KTKPTQ. Residues 186–191 and K222 each bind UTP; that span reads KTKPTQ. In terms of domain architecture, Glutamine amidotransferase type-1 spans 290-541; it reads TVGMVGKYVD…IRAARAQHEK (252 aa). G351 is an L-glutamine binding site. The active-site Nucleophile; for glutamine hydrolysis is the C378. L-glutamine contacts are provided by residues 379–382, E402, and R469; that span reads LGMQ. Catalysis depends on residues H514 and E516.

Belongs to the CTP synthase family. As to quaternary structure, homotetramer.

It carries out the reaction UTP + L-glutamine + ATP + H2O = CTP + L-glutamate + ADP + phosphate + 2 H(+). The enzyme catalyses L-glutamine + H2O = L-glutamate + NH4(+). The catalysed reaction is UTP + NH4(+) + ATP = CTP + ADP + phosphate + 2 H(+). Its pathway is pyrimidine metabolism; CTP biosynthesis via de novo pathway; CTP from UDP: step 2/2. With respect to regulation, allosterically activated by GTP, when glutamine is the substrate; GTP has no effect on the reaction when ammonia is the substrate. The allosteric effector GTP functions by stabilizing the protein conformation that binds the tetrahedral intermediate(s) formed during glutamine hydrolysis. Inhibited by the product CTP, via allosteric rather than competitive inhibition. Catalyzes the ATP-dependent amination of UTP to CTP with either L-glutamine or ammonia as the source of nitrogen. Regulates intracellular CTP levels through interactions with the four ribonucleotide triphosphates. The chain is CTP synthase from Thioalkalivibrio sulfidiphilus (strain HL-EbGR7).